We begin with the raw amino-acid sequence, 132 residues long: Large ribosomal subunit protein bL12 (132 aa).

Residues 100–126 (ESTPKPVKEGASKEDAEAAKKELEEAG) show a composition bias toward basic and acidic residues. The segment at 100-132 (ESTPKPVKEGASKEDAEAAKKELEEAGAKVSIK) is disordered.

The protein belongs to the bacterial ribosomal protein bL12 family. In terms of assembly, homodimer. Part of the ribosomal stalk of the 50S ribosomal subunit. Forms a multimeric L10(L12)X complex, where L10 forms an elongated spine to which 2 to 4 L12 dimers bind in a sequential fashion. Binds GTP-bound translation factors.

Its function is as follows. Forms part of the ribosomal stalk which helps the ribosome interact with GTP-bound translation factors. Is thus essential for accurate translation. This Thermosynechococcus vestitus (strain NIES-2133 / IAM M-273 / BP-1) protein is Large ribosomal subunit protein bL12.